Reading from the N-terminus, the 585-residue chain is ATP-dependent lipid A-core flippase (585 aa).

The next 6 helical transmembrane spans lie at 25 to 45 (FLAA…FPAI), 63 to 83 (WLFY…FGFL), 127 to 146 (IAYD…TSLI), 150 to 170 (LSIV…TLIT), 250 to 270 (QSPL…GVAL), and 277 to 297 (QTTV…MAPL). The ABC transmembrane type-1 domain maps to 26-309 (LAALACMGVA…VTDVNAPIQR (284 aa)). In terms of domain architecture, ABC transporter spans 341 to 577 (VEFDGVTFTY…DGLYARLYRM (237 aa)). 375–382 (GPSGSGKT) provides a ligand contact to ATP.

This sequence belongs to the ABC transporter superfamily. Lipid exporter (TC 3.A.1.106) family. Homodimer.

The protein resides in the cell inner membrane. It catalyses the reaction ATP + H2O + lipid A-core oligosaccharideSide 1 = ADP + phosphate + lipid A-core oligosaccharideSide 2.. Involved in lipopolysaccharide (LPS) biosynthesis. Translocates lipid A-core from the inner to the outer leaflet of the inner membrane. Transmembrane domains (TMD) form a pore in the inner membrane and the ATP-binding domain (NBD) is responsible for energy generation. In Dechloromonas aromatica (strain RCB), this protein is ATP-dependent lipid A-core flippase.